Consider the following 925-residue polypeptide: Neuronal PAS domain-containing protein 3 (925 aa).

A bHLH domain is found at 58–111 (LRKEKSRDAARSRRGKENFEFYELAKLLPLPAAITSQLDKASIIRLTISYLKMR). Residues 60–71 (KEKSRDAARSRR) are DNA-binding. Disordered regions lie at residues 119 to 138 (PPWN…KGAQ) and 219 to 257 (LPPG…SPSL). Residues 152–222 (EAHLGSHILQ…EQLGMKLPPG (71 aa)) enclose the PAS 1 domain. Low complexity predominate over residues 234 to 256 (AASSASSSSQSETPEPVETTSPS). In terms of domain architecture, PAS 2 spans 324-394 (PPPTINEVRI…HSHLDLLNKG (71 aa)). The region spanning 398–441 (TKYYRWMQKNGGYIWIQSSATIAINAKNANEKNIIWVNYLLSNP) is the PAC domain. Disordered stretches follow at residues 457–555 (PEKA…FGAL), 576–645 (PCES…SSPH), and 664–774 (NESS…GASN). Composition is skewed to basic and acidic residues over residues 484-493 (ENSKSDEKGN) and 529-549 (DSRD…KAAE). A compositionally biased stretch (basic residues) spans 601–622 (KHQKRKRRRKRQKGGSASRRRL). Residues 680-690 (NESPYSMTKPP) are compositionally biased toward polar residues. Gly residues-rich tracts occupy residues 700–710 (GQGGSIGGGGA) and 760–771 (GGGAGSGGGGPG).

In terms of assembly, efficient DNA binding requires dimerization with another bHLH protein. Interacts with ARNT; forms a heterodimer that binds core DNA sequence 5'-[AG]CGTG-3' within the hypoxia response element (HRE) of target gene promoters. Detected exclusively in adult brain in inhibitory interneurons.

It localises to the nucleus. May play a broad role in neurogenesis. May control regulatory pathways relevant to schizophrenia and to psychotic illness. The sequence is that of Neuronal PAS domain-containing protein 3 (Npas3) from Mus musculus (Mouse).